Reading from the N-terminus, the 630-residue chain is Protein mono-ADP-ribosyltransferase PARP6 (630 aa).

ADP-ribosylcysteine is present on cysteine 237. The PARP catalytic domain occupies 394–620 (EMTQGSYLEI…QDPKIQKEIM (227 aa)). The residue at position 600 (aspartate 600) is an ADP-ribosyl aspartic acid.

The protein belongs to the ARTD/PARP family. Auto-mono-ADP-ribosylated.

It carries out the reaction L-aspartyl-[protein] + NAD(+) = 4-O-(ADP-D-ribosyl)-L-aspartyl-[protein] + nicotinamide. The enzyme catalyses L-cysteinyl-[protein] + NAD(+) = S-(ADP-D-ribosyl)-L-cysteinyl-[protein] + nicotinamide + H(+). Functionally, mono-ADP-ribosyltransferase that mediates mono-ADP-ribosylation of target proteins. This chain is Protein mono-ADP-ribosyltransferase PARP6, found in Mus musculus (Mouse).